A 288-amino-acid polypeptide reads, in one-letter code: Formamidopyrimidine-DNA glycosylase (288 aa).

The active-site Schiff-base intermediate with DNA is proline 2. The active-site Proton donor is the glutamate 3. Residue lysine 58 is the Proton donor; for beta-elimination activity of the active site. DNA is bound by residues histidine 99, arginine 118, and lysine 161. The segment at 252-288 adopts an FPG-type zinc-finger fold; the sequence is RVYDREAEPCPREGCGGTIKRIVQAGRSTFFCAKCQR. The Proton donor; for delta-elimination activity role is filled by arginine 278.

This sequence belongs to the FPG family. Monomer. Zn(2+) is required as a cofactor.

The enzyme catalyses Hydrolysis of DNA containing ring-opened 7-methylguanine residues, releasing 2,6-diamino-4-hydroxy-5-(N-methyl)formamidopyrimidine.. It catalyses the reaction 2'-deoxyribonucleotide-(2'-deoxyribose 5'-phosphate)-2'-deoxyribonucleotide-DNA = a 3'-end 2'-deoxyribonucleotide-(2,3-dehydro-2,3-deoxyribose 5'-phosphate)-DNA + a 5'-end 5'-phospho-2'-deoxyribonucleoside-DNA + H(+). Involved in base excision repair of DNA damaged by oxidation or by mutagenic agents. Acts as a DNA glycosylase that recognizes and removes damaged bases. Has a preference for oxidized purines, such as 7,8-dihydro-8-oxoguanine (8-oxoG). Has AP (apurinic/apyrimidinic) lyase activity and introduces nicks in the DNA strand. Cleaves the DNA backbone by beta-delta elimination to generate a single-strand break at the site of the removed base with both 3'- and 5'-phosphates. The chain is Formamidopyrimidine-DNA glycosylase from Beijerinckia indica subsp. indica (strain ATCC 9039 / DSM 1715 / NCIMB 8712).